We begin with the raw amino-acid sequence, 448 residues long: Tubulin alpha chain, nucleomorph (448 aa).

GTP is bound by residues Gln-11, Glu-71, Ser-140, Gly-144, Thr-145, Thr-179, Asn-206, and Asn-228. Glu-71 is a Mg(2+) binding site. Glu-254 is a catalytic residue.

Belongs to the tubulin family. Dimer of alpha and beta chains. A typical microtubule is a hollow water-filled tube with an outer diameter of 25 nm and an inner diameter of 15 nM. Alpha-beta heterodimers associate head-to-tail to form protofilaments running lengthwise along the microtubule wall with the beta-tubulin subunit facing the microtubule plus end conferring a structural polarity. Microtubules usually have 13 protofilaments but different protofilament numbers can be found in some organisms and specialized cells. Mg(2+) is required as a cofactor.

The enzyme catalyses GTP + H2O = GDP + phosphate + H(+). Functionally, tubulin is the major constituent of microtubules, a cylinder consisting of laterally associated linear protofilaments composed of alpha- and beta-tubulin heterodimers. Microtubules grow by the addition of GTP-tubulin dimers to the microtubule end, where a stabilizing cap forms. Below the cap, tubulin dimers are in GDP-bound state, owing to GTPase activity of alpha-tubulin. In Guillardia theta (Cryptophyte), this protein is Tubulin alpha chain, nucleomorph (tubA).